We begin with the raw amino-acid sequence, 285 residues long: Pseudouridine-5'-phosphate glycosidase (285 aa).

The active-site Proton donor is the E17. Substrate contacts are provided by K77 and V97. Position 126 (D126) interacts with Mn(2+). 128-130 (SQD) is a binding site for substrate. K147 (nucleophile) is an active-site residue.

The protein belongs to the pseudouridine-5'-phosphate glycosidase family. In terms of assembly, homotrimer. Mn(2+) is required as a cofactor.

The enzyme catalyses D-ribose 5-phosphate + uracil = psi-UMP + H2O. Catalyzes the reversible cleavage of pseudouridine 5'-phosphate (PsiMP) to ribose 5-phosphate and uracil. Functions biologically in the cleavage direction, as part of a pseudouridine degradation pathway. This is Pseudouridine-5'-phosphate glycosidase from Thermotoga maritima (strain ATCC 43589 / DSM 3109 / JCM 10099 / NBRC 100826 / MSB8).